We begin with the raw amino-acid sequence, 276 residues long: Octanoyltransferase LipM (276 aa).

In terms of domain architecture, BPL/LPL catalytic spans 32-247 (GEVAPTLRFY…GFEDALQLTF (216 aa)). Catalysis depends on Cys-149, which acts as the Acyl-thioester intermediate.

This sequence belongs to the octanoyltransferase LipM family. As to quaternary structure, monomer.

The enzyme catalyses octanoyl-[ACP] + L-lysyl-[protein] = N(6)-octanoyl-L-lysyl-[protein] + holo-[ACP] + H(+). It functions in the pathway protein modification; protein lipoylation via endogenous pathway; protein N(6)-(lipoyl)lysine from octanoyl-[acyl-carrier-protein]. Catalyzes the transfer of endogenously produced octanoic acid from octanoyl-acyl-carrier-protein onto the lipoyl domain of GcvH, an intermediate carrier during protein lipoylation. The sequence is that of Octanoyltransferase LipM from Exiguobacterium sibiricum (strain DSM 17290 / CCUG 55495 / CIP 109462 / JCM 13490 / 255-15).